A 378-amino-acid chain; its full sequence is Glutamate 5-kinase (378 aa).

Lys17 contacts ATP. The substrate site is built by Ser58, Asp145, and Asn157. Residues 177 to 178 (TD) and 221 to 227 (TGGMMTK) each bind ATP. In terms of domain architecture, PUA spans 286–364 (VGKLYLDSGA…KEIPTILGYV (79 aa)).

It belongs to the glutamate 5-kinase family.

It is found in the cytoplasm. The enzyme catalyses L-glutamate + ATP = L-glutamyl 5-phosphate + ADP. Its pathway is amino-acid biosynthesis; L-proline biosynthesis; L-glutamate 5-semialdehyde from L-glutamate: step 1/2. Functionally, catalyzes the transfer of a phosphate group to glutamate to form L-glutamate 5-phosphate. The sequence is that of Glutamate 5-kinase from Nostoc sp. (strain PCC 7120 / SAG 25.82 / UTEX 2576).